The chain runs to 1339 residues: Retrotransposon Gag-like protein 9 (1339 aa).

Composition is skewed to polar residues over residues 533 to 545, 679 to 693, and 700 to 711; these read TVPT…TQKT, SGTK…TTSG, and TRLSGPGATSTP. Disordered stretches follow at residues 533-555, 679-711, 845-864, 880-901, 982-1010, and 1078-1116; these read TVPT…PMST, SGTK…TSTP, GVMS…SRPQ, PATA…LSTL, ATSL…GAGS, and ATDS…PPKE. The segment covering 891–901 has biased composition (low complexity); that stretch reads RSPASSTLSTL. The span at 1078–1106 shows a compositional bias: polar residues; it reads ATDSGEASTSHTRFTAPGSKSTPHMTSTA.

This Mus musculus (Mouse) protein is Retrotransposon Gag-like protein 9.